Here is a 266-residue protein sequence, read N- to C-terminus: UPF0294 protein YafD (266 aa).

Belongs to the UPF0294 family.

The protein resides in the cytoplasm. This Salmonella paratyphi C (strain RKS4594) protein is UPF0294 protein YafD.